The following is a 458-amino-acid chain: UDP-N-acetylmuramoylalanine--D-glutamate ligase (458 aa).

Residue 124–130 coordinates ATP; the sequence is GSDGKTT.

It belongs to the MurCDEF family.

The protein resides in the cytoplasm. It carries out the reaction UDP-N-acetyl-alpha-D-muramoyl-L-alanine + D-glutamate + ATP = UDP-N-acetyl-alpha-D-muramoyl-L-alanyl-D-glutamate + ADP + phosphate + H(+). It participates in cell wall biogenesis; peptidoglycan biosynthesis. Its function is as follows. Cell wall formation. Catalyzes the addition of glutamate to the nucleotide precursor UDP-N-acetylmuramoyl-L-alanine (UMA). The sequence is that of UDP-N-acetylmuramoylalanine--D-glutamate ligase from Clostridium perfringens (strain 13 / Type A).